Reading from the N-terminus, the 166-residue chain is Regulatory protein RecX (166 aa).

It belongs to the RecX family.

It localises to the cytoplasm. In terms of biological role, modulates RecA activity. The chain is Regulatory protein RecX from Shigella boydii serotype 18 (strain CDC 3083-94 / BS512).